A 470-amino-acid polypeptide reads, in one-letter code: MDLAAAAVAVSFPRPAPPPRRCAPRRHRRALAPRAASSSPSPSTAVAAPVYAPTPRDRALRTPHSGYHYDGTARPFFEGWYFKVSIPECRQSFCFMYSVENPLFRDGMSDLDRVIHGSRFTGVGAQILGADDKYICQFTEKSNNFWGSRHELMLGNTFIPNNGSTPPEGEVPPQEFSSRVLEGFQVTPIWHQGFIRDDGRSKYVPNVQTARWEYSTRPVYGWGDVTSKQKSTAGWLAAFPFFEPHWQICMAGGLSTGWIEWDGERFEFENAPSYSEKNWGAGFPRKWYWVQCNVFSGASGEVALTAAGGLRKIGLGETYESPSLIGIHYEGKFYEFVPWTGTVSWDIAPWGHWKLSGENKNHLVEIEATTKEPGTALRAPTMEAGLVPACKDTCYGDLRLQMWEKRNDGGKGKMILDATSNMAALEVGGGPWFNGWKGTTVSNEIVNNVVGTQVDVESLFPIPFLKPPGL.

Residues 1 to 61 (MDLAAAAVAV…APTPRDRALR (61 aa)) constitute a chloroplast transit peptide. A disordered region spans residues 14-48 (RPAPPPRRCAPRRHRRALAPRAASSSPSPSTAVAA). The segment covering 22–31 (CAPRRHRRAL) has biased composition (basic residues). Positions 32–48 (APRAASSSPSPSTAVAA) are enriched in low complexity.

Expressed in the roots, stems, leaves and spikelets.

Its subcellular location is the plastid. The protein localises to the chloroplast. The protein resides in the plastoglobule. It participates in cofactor biosynthesis; tocopherol biosynthesis. Involved in the synthesis of both tocopherols and tocotrienols (vitamin E), which presumably protect photosynthetic complexes from oxidative stress. Catalyzes the conversion of 2-methyl-6-phytyl-1,4-hydroquinone and 2,3-dimethyl-5-phytyl-1,4-hydroquinone (DMPQ) to delta- and gamma-tocopherol respectively. Also converts 2,3-dimethyl-5-geranylgeranyl-1,4-hydroquinone (DMGQ) to gamma-tocotrienol. The sequence is that of Probable tocopherol cyclase, chloroplastic (VTE1) from Oryza sativa subsp. japonica (Rice).